We begin with the raw amino-acid sequence, 788 residues long: MNQRILSTLGFDKVKQQLLQFIVTAQGTNEVSELLPIADENKIQSWLNETQDGLKVQRLRGGIPIPKLENIQPHMKRIEIGADLNGIELAQVGRVLSTTSELTRFFDELSENEVDFERLYMWREQLEVLPELNRQLKQAIDDDGYVTDEASPALKAIRQNIRRSEQTIREELDSIIRGKNARYLSDALVTMRNERYVIPVKQEYKNIFGGVVHDQSASGQTLFIEPKQILEMNNRLRQQQIAERNEITRILAELSAELVPYRREITHNAYVIGKLDFINAKARLGKELKAVVPEISQANHVVFKQARHPLLNPEKAVANDIVIGEEYQAIVITGPNTGGKTITLKTLGLLQLMGQAGLPIPVEEESKMGIFTEVFADIGDEQSIEQSLSTFSSHMTNIVSVLKKVDHQSLVLFDELGAGTDPQEGAALAIAILDSLGAKGAYVMATTHYPELKVYGYNRAGTINASMEFDVDTLSPTYRLLIGVPGRSNAFEISKRLGLDNSIIEAAKQIMDGESQDLNEMIEDLENRRKMAETEYLEARHYVDESAALHKELKEAYQVFFEEREKELQKARKEANKIIAEAEENAETIISDIRKMQLESGQQGGVKEHQLIDAKTQLSQLHHEETKLAKNKVLKKAKEQKKLKAGDEVIVNTYGQRGTLLKDNGKGQWQVQLGILKMNVSEEDMTPVAPQKEAKPRVTTVRSAESSHVGTQLDLRGKRYEEALAEVDQYIDAAILAGYPQVTIVHGKGTGALRTGITEFLKNHRSVKSYEFAPQNQGGNGATVVKFQ.

Glycine 334–threonine 341 is an ATP binding site. The Smr domain occupies leucine 713–glutamine 788.

This sequence belongs to the DNA mismatch repair MutS family. MutS2 subfamily. As to quaternary structure, homodimer. Binds to stalled ribosomes, contacting rRNA.

Its function is as follows. Endonuclease that is involved in the suppression of homologous recombination and thus may have a key role in the control of bacterial genetic diversity. Acts as a ribosome collision sensor, splitting the ribosome into its 2 subunits. Detects stalled/collided 70S ribosomes which it binds and splits by an ATP-hydrolysis driven conformational change. Acts upstream of the ribosome quality control system (RQC), a ribosome-associated complex that mediates the extraction of incompletely synthesized nascent chains from stalled ribosomes and their subsequent degradation. Probably generates substrates for RQC. This is Endonuclease MutS2 from Enterococcus faecalis (strain ATCC 700802 / V583).